A 376-amino-acid chain; its full sequence is MTKCNIFNMIFLKFSNAFIKKIKYLSIISIISVFLLNSSIVYSCSKIILIFDNNFKENNKNILNKLVLPIKNIILKGTSNLEFNDYLLKLSNFYGSPIHKCIYNFPYKKLQNNNLNNLKYIIFKSKIDNNFIKNMQYLNVSNDNIDNVVRCIKLELKIHQLKQDHKCNILIQNNSFLKHNIVQKNIILSFEIPYNTKNIYGFFTKKNKFFDVHGISSAPIFLKFPFLKKYRISSKFNPNRFNPITKKNSPHQGIDFAMPIGTPILSIGDGVILNAKFSIQAGNYITIQHNCSYITKYMHLKKILVKIGDKVKMRDKIGLSGNTGYSTGPHLHYEVWLHKKVINPKNLKTRECLIKKNLKEHINFSNIIITQFEIFK.

Residues Y24–C44 traverse the membrane as a helical segment. Residue H251 participates in Zn(2+) binding.

This sequence belongs to the peptidase M23B family. It depends on Zn(2+) as a cofactor.

It is found in the cell membrane. This is an uncharacterized protein from Buchnera aphidicola subsp. Baizongia pistaciae (strain Bp).